The primary structure comprises 561 residues: MTLQSESRFYYQLLAAVLIPALFVAWAARLRQNRKYPPGPKGIPIFGNLFQLSTRPWIEFSAFKEQYGPLVYLNIVGQPLLITNTHTAATDLFDRRGGVYSDRPRSIVADYLTGGLYLPFARHGPTWLKLRRAGHAFMHKGVAHKYRDTQFKEALTLTHHLLQSPSGRRRQLFESAEASIHSIVYDQPSSGGPVYPKMTDFSTLINKAVTPLFTPAEFLPLMQYVPSWLAGWKRRAQQGFVLFSELCEGLLEEVAKRVDAGDDRPSMAGGLIREREKHGLTNLEAAWLSGMMILVGTETNTLAMSWFLYAMIAYPDKQKRCQAELDAVVGRSRMPTFEDLEKLPYLRATIREILRWRPSIPVGARHYTTKDDWYQGYFIPKGTICFPNVWSLNHDPAIYGTDADHFNPGRFIDKDGGLSPAIPATKDGAFLIPHHDLHNSHGLNPPKMQKVCLRFIDLHTFRSKYPLSIAVPGHVSYGFGSRICLGRHIANDALFINFASILWATSISPAMNANTGKPDVPDKLAYSNLGLLIVPTTTECVIQPRFDEAEGILAQTRELCM.

Residues 8–28 (RFYYQLLAAVLIPALFVAWAA) form a helical membrane-spanning segment. C484 contributes to the heme binding site.

Belongs to the cytochrome P450 family. Heme is required as a cofactor.

The protein resides in the membrane. The protein operates within secondary metabolite biosynthesis. Functionally, cytochrome P450 monooxygenase; part of the gene cluster that mediates the biosynthesis of the psychoactive metabolites ibotenic acid and muscimol. The first committed step is glutamate hydroxylation by the 2-oxoglutarate-dependent dioxygenase iboH, and the last step is decarboxylation of ibotenic acid to muscimol by the decarboxylase iboD. The order of the intermediate reactions is somewhat ambiguous. IboA likely activates the carboxylic acid at position 5 to introduce an amide bond, and the flavin monooxygenase iboF generates the N-O bond. There are several options for the latter step. One option is that iboF directly hydroxylates the amide nitrogen formed by iboA to produce a hydroxamic acid species. Another option is that iboF hydroxylates an external N-containing compound, whose resulting N-O bond is subsequently introduced into the hydroxyglutamate scaffold. The paralogous PLP-dependent cystathionine gamma-synthase-like enzymes iboG1 and iboG2 are likely involved in substitution of the OH group at position 3 by the O-N moiety. The first cyclic intermediate is most probably tricholomic acid which is likely desaturated to ibotenic acid by the cytochrome P450 monooxygenase iboC. The chain is Cytochrome P450 monooxygenase iboC from Amanita muscaria (strain Koide BX008).